A 250-amino-acid chain; its full sequence is 4-hydroxy-tetrahydrodipicolinate reductase (250 aa).

NAD(+) contacts are provided by residues 9–14, 79–81, and 103–106; these read GATGKM, GTT, and SANM. His135 (proton donor/acceptor) is an active-site residue. A (S)-2,3,4,5-tetrahydrodipicolinate-binding site is contributed by His136. Catalysis depends on Lys139, which acts as the Proton donor. (S)-2,3,4,5-tetrahydrodipicolinate is bound at residue 145 to 146; sequence GT.

Belongs to the DapB family.

Its subcellular location is the cytoplasm. It carries out the reaction (S)-2,3,4,5-tetrahydrodipicolinate + NAD(+) + H2O = (2S,4S)-4-hydroxy-2,3,4,5-tetrahydrodipicolinate + NADH + H(+). The catalysed reaction is (S)-2,3,4,5-tetrahydrodipicolinate + NADP(+) + H2O = (2S,4S)-4-hydroxy-2,3,4,5-tetrahydrodipicolinate + NADPH + H(+). It functions in the pathway amino-acid biosynthesis; L-lysine biosynthesis via DAP pathway; (S)-tetrahydrodipicolinate from L-aspartate: step 4/4. Functionally, catalyzes the conversion of 4-hydroxy-tetrahydrodipicolinate (HTPA) to tetrahydrodipicolinate. The polypeptide is 4-hydroxy-tetrahydrodipicolinate reductase (Rickettsia bellii (strain OSU 85-389)).